Reading from the N-terminus, the 177-residue chain is Thymidine kinase (177 aa).

11 to 18 is a binding site for ATP; sequence GPMFSGKS. Catalysis depends on glutamate 83, which acts as the Proton acceptor. Phenylalanine 113 serves as a coordination point for substrate. 2 residues coordinate Zn(2+): cysteine 138 and cysteine 141. Residue 157–161 participates in substrate binding; it reads IEIIG. 2 residues coordinate Zn(2+): cysteine 170 and cysteine 173.

This sequence belongs to the thymidine kinase family. As to quaternary structure, homotetramer. Two molecules of substrate bind to each enzyme tetramer.

It catalyses the reaction thymidine + ATP = dTMP + ADP + H(+). Phosphorylates thymidine and thymidine analogs, such as azidothymidine (AZT). Part of the salvage pathway for pyrimidine deoxyribonucleotide synthesis. The chain is Thymidine kinase (OPG101) from Variola virus (isolate Human/India/Ind3/1967) (VARV).